Reading from the N-terminus, the 106-residue chain is V-type proton ATPase subunit G2 (106 aa).

An N-acetylmethionine modification is found at methionine 1. Positions 31-67 (LKQAKEEAETEVAEHKTSTEQGFQRKLEATSGDSGAN) are disordered. A compositionally biased stretch (basic and acidic residues) spans 33–58 (QAKEEAETEVAEHKTSTEQGFQRKLE).

Belongs to the V-ATPase G subunit family. V-ATPase is a heteromultimeric enzyme composed of a peripheral catalytic V1 complex (components A to H) attached to an integral membrane V0 proton pore complex (components: a, c, c'', d and e).

It is found in the vacuole membrane. Catalytic subunit of the peripheral V1 complex of vacuolar ATPase (V-ATPase). V-ATPase is responsible for acidifying a variety of intracellular compartments in eukaryotic cells. This Arabidopsis thaliana (Mouse-ear cress) protein is V-type proton ATPase subunit G2 (VHA-G2).